The sequence spans 197 residues: Transcription factor FapR (197 aa).

The protein belongs to the FapR family.

Its function is as follows. Transcriptional factor involved in regulation of membrane lipid biosynthesis by repressing genes involved in fatty acid and phospholipid metabolism. The protein is Transcription factor FapR of Bacillus cereus (strain 03BB102).